Consider the following 130-residue polypeptide: Large ribosomal subunit protein bL17 (130 aa).

This sequence belongs to the bacterial ribosomal protein bL17 family. As to quaternary structure, part of the 50S ribosomal subunit. Contacts protein L32.

The polypeptide is Large ribosomal subunit protein bL17 (Pectobacterium atrosepticum (strain SCRI 1043 / ATCC BAA-672) (Erwinia carotovora subsp. atroseptica)).